A 120-amino-acid chain; its full sequence is Large ribosomal subunit protein bL19 (120 aa).

Belongs to the bacterial ribosomal protein bL19 family.

In terms of biological role, this protein is located at the 30S-50S ribosomal subunit interface and may play a role in the structure and function of the aminoacyl-tRNA binding site. In Thermodesulfovibrio yellowstonii (strain ATCC 51303 / DSM 11347 / YP87), this protein is Large ribosomal subunit protein bL19.